Consider the following 316-residue polypeptide: Protein lifeguard 2 (316 aa).

The interval 1-49 (MTQGKLSVANKAPGTEGQQQANGEKKDAPAVPSAPPSYEEATSGEGLKA) is disordered. 3 consecutive transmembrane segments (helical) span residues 106–126 (VYTI…LFTF), 138–158 (PGWY…LACC), and 165–185 (FPWN…LTGM). Asn-191 carries an N-linked (GlcNAc...) asparagine glycan. 4 helical membrane-spanning segments follow: residues 194–214 (SVLL…IFSF), 225–245 (GVLF…AILL), 251–271 (PWLH…FLAF), and 290–310 (IFGA…FLQL).

The protein belongs to the BI1 family. LFG subfamily. In terms of assembly, interacts with FAS/TNFRSF6 and BAX. Expressed at high levels on dendrites and to a lesser extent on the soma and axons of neurons in various regions of brain.

The protein localises to the cell membrane. It localises to the membrane raft. It is found in the postsynaptic cell membrane. Antiapoptotic protein which protects cells uniquely from Fas-induced apoptosis. Regulates Fas-mediated apoptosis in neurons by interfering with caspase-8 activation. Plays a role in cerebellar development by affecting cerebellar size, internal granular layer (IGL) thickness, and Purkinje cell (PC) development. The polypeptide is Protein lifeguard 2 (Faim2) (Rattus norvegicus (Rat)).